The chain runs to 341 residues: tRNA N6-adenosine threonylcarbamoyltransferase (341 aa).

Positions 111 and 115 each coordinate Fe cation. Substrate is bound by residues 134-138 (LVSGG), aspartate 167, glycine 180, and asparagine 276. Aspartate 304 contributes to the Fe cation binding site.

Belongs to the KAE1 / TsaD family. Requires Fe(2+) as cofactor.

It localises to the cytoplasm. The enzyme catalyses L-threonylcarbamoyladenylate + adenosine(37) in tRNA = N(6)-L-threonylcarbamoyladenosine(37) in tRNA + AMP + H(+). Required for the formation of a threonylcarbamoyl group on adenosine at position 37 (t(6)A37) in tRNAs that read codons beginning with adenine. Is involved in the transfer of the threonylcarbamoyl moiety of threonylcarbamoyl-AMP (TC-AMP) to the N6 group of A37, together with TsaE and TsaB. TsaD likely plays a direct catalytic role in this reaction. The sequence is that of tRNA N6-adenosine threonylcarbamoyltransferase from Ectopseudomonas mendocina (strain ymp) (Pseudomonas mendocina).